We begin with the raw amino-acid sequence, 1325 residues long: Nephrocystin-3 (1325 aa).

The segment at 1–20 (MGTASSLVSPTGGEVIEDTY) is disordered. A lipid anchor (N-myristoyl glycine) is attached at G2. The stretch at 107–203 (SMGRREAKLD…QRLQAQGIQV (97 aa)) forms a coiled coil. TPR repeat units follow at residues 467-500 (TPEE…AHEL), 881-914 (CLLN…KGAM), 916-937 (TEYF…MLCL), 938-971 (ADLY…RETA), 980-1013 (AQSL…SENA), 1022-1055 (AREL…RQQA), 1088-1121 (ARTL…RERV), 1130-1163 (AQSL…RRRA), 1172-1205 (AYTV…RQKS), 1214-1247 (ATAL…YEDS), and 1256-1289 (GETL…KEAE). Positions 1293–1325 (LGGKAPSRQSSSGDTFLFKTTHSPNVFLPQGQS) are disordered. A compositionally biased stretch (polar residues) spans 1299–1325 (SRQSSSGDTFLFKTTHSPNVFLPQGQS).

As to quaternary structure, interacts with NPHP1 and INVS/NPHP2. Interacts (when myristoylated) with UNC119 and UNC119B; interaction is required for localization to cilium. Interacts with CEP164. Component of a complex containing at least ANKS6, INVS, NEK8 and NPHP3. ANKS6 may organize complex assembly by linking INVS and NPHP3 to NEK8 and INVS may target the complex to the proximal ciliary axoneme.

The protein resides in the cell projection. Its subcellular location is the cilium. In terms of biological role, required for normal ciliary development and function. Inhibits disheveled-1-induced canonical Wnt-signaling activity and may also play a role in the control of non-canonical Wnt signaling that regulates planar cell polarity. Probably acts as a molecular switch between different Wnt signaling pathways. Required for proper convergent extension cell movements. The chain is Nephrocystin-3 (Nphp3) from Mus musculus (Mouse).